The chain runs to 594 residues: Aspartate--tRNA ligase (594 aa).

An L-aspartate-binding site is contributed by glutamate 171. Residues 195 to 198 (QLFK) form an aspartate region. Arginine 217 lines the L-aspartate pocket. Residues 217-219 (RDE) and glutamine 226 contribute to the ATP site. Residue histidine 449 participates in L-aspartate binding. Residue glutamate 483 participates in ATP binding. An L-aspartate-binding site is contributed by arginine 490. 535–538 (GLDR) is a binding site for ATP.

It belongs to the class-II aminoacyl-tRNA synthetase family. Type 1 subfamily. Homodimer.

It localises to the cytoplasm. It catalyses the reaction tRNA(Asp) + L-aspartate + ATP = L-aspartyl-tRNA(Asp) + AMP + diphosphate. Functionally, catalyzes the attachment of L-aspartate to tRNA(Asp) in a two-step reaction: L-aspartate is first activated by ATP to form Asp-AMP and then transferred to the acceptor end of tRNA(Asp). The sequence is that of Aspartate--tRNA ligase from Proteus mirabilis (strain HI4320).